Consider the following 467-residue polypeptide: DNA polymerase IV (467 aa).

In terms of domain architecture, UmuC spans 5–187 (VLHIDMDAFF…LPVGALWGVG (183 aa)). Asp-9 and Asp-104 together coordinate Mg(2+). Glu-105 is a catalytic residue. Disordered regions lie at residues 364–383 (PDTD…STQV) and 429–449 (KGRT…DPLD).

The protein belongs to the DNA polymerase type-Y family. In terms of assembly, monomer. The cofactor is Mg(2+).

The protein localises to the cytoplasm. It carries out the reaction DNA(n) + a 2'-deoxyribonucleoside 5'-triphosphate = DNA(n+1) + diphosphate. In terms of biological role, poorly processive, error-prone DNA polymerase involved in untargeted mutagenesis. Copies undamaged DNA at stalled replication forks, which arise in vivo from mismatched or misaligned primer ends. These misaligned primers can be extended by PolIV. Exhibits no 3'-5' exonuclease (proofreading) activity. May be involved in translesional synthesis, in conjunction with the beta clamp from PolIII. This chain is DNA polymerase IV, found in Corynebacterium glutamicum (strain ATCC 13032 / DSM 20300 / JCM 1318 / BCRC 11384 / CCUG 27702 / LMG 3730 / NBRC 12168 / NCIMB 10025 / NRRL B-2784 / 534).